The sequence spans 243 residues: Terpene cyclase dpmpB (243 aa).

The next 7 membrane-spanning stretches (helical) occupy residues Phe-13 to Ala-33, Ala-51 to Phe-71, Trp-78 to Ala-98, Leu-112 to Ala-132, Ala-141 to Cys-161, Ser-169 to Leu-189, and Leu-207 to Val-227.

This sequence belongs to the paxB family.

The protein localises to the membrane. Its pathway is secondary metabolite biosynthesis; terpenoid biosynthesis. Functionally, terpene cyclase; part of the gene cluster that mediates the biosynthesis of diterpenoid pyrones. The first step of the pathway is the synthesis of the alpha-pyrone moiety by the polyketide synthase dpmpA via condensation of one acetyl-CoA starter unit with 3 malonyl-CoA units and 2 methylations. The alpha-pyrone is then combined with geranylgeranyl pyrophosphate (GGPP) formed by the GGPP synthase dpmpD through the action of the prenyltransferase dpmpC to yield a linear alpha-pyrone diterpenoid. Subsequent steps in the diterpenoid pyrone biosynthetic pathway involve the decalin core formation, which is initiated by the epoxidation of the C10-C11 olefin by the FAD-dependent oxidoreductase dpmpE, and is followed by a cyclization cascade catalyzed by the terpene cyclase dpmpB. The short chain dehydrogenase/reductase dpmpG then oxidizes the 8S hydroxy group to a ketone and the short chain dehydrogenase/reductase dpmpH reduces the ketone to the 8R hydroxy group to yield higginsianin B. Higginsianin B is further methylated by the methyltransferase dpmpI to produce the intermediate named FDDP B. The cytochrome P450 monooxygenase dpmpJ then oxidizes the C-26 methyl to primary alcohol, producing the final diterpenoid pyrone with a C-26 primary alcohol on the gamma-pyrone moiety named FDDP C. In Macrophomina phaseolina (strain MS6) (Charcoal rot fungus), this protein is Terpene cyclase dpmpB.